Here is a 516-residue protein sequence, read N- to C-terminus: Histidine ammonia-lyase (516 aa).

The segment at residues 143–145 (ASG) is a cross-link (5-imidazolinone (Ala-Gly)). Ser-144 bears the 2,3-didehydroalanine (Ser) mark.

Belongs to the PAL/histidase family. Post-translationally, contains an active site 4-methylidene-imidazol-5-one (MIO), which is formed autocatalytically by cyclization and dehydration of residues Ala-Ser-Gly.

It localises to the cytoplasm. The catalysed reaction is L-histidine = trans-urocanate + NH4(+). It functions in the pathway amino-acid degradation; L-histidine degradation into L-glutamate; N-formimidoyl-L-glutamate from L-histidine: step 1/3. The protein is Histidine ammonia-lyase of Koribacter versatilis (strain Ellin345).